Here is a 352-residue protein sequence, read N- to C-terminus: C-C chemokine receptor type 5 (352 aa).

Residues 1-30 (MDYQVSSPIYDIDYYTSEPCQKINVKQIAA) are Extracellular-facing. The residue at position 3 (Tyr-3) is a Sulfotyrosine. O-linked (GalNAc...) serine glycans are attached at residues Ser-6 and Ser-7. 3 positions are modified to sulfotyrosine: Tyr-10, Tyr-14, and Tyr-15. 2 disulfides stabilise this stretch: Cys-20/Cys-269 and Cys-101/Cys-178. Residues 31-58 (RLLPPLYSLVFIFGFVGNMLVILILINC) traverse the membrane as a helical segment. Topologically, residues 59–68 (KRLKSMTDIY) are cytoplasmic. Residues 69–89 (LLNLAISDLFFLLTVPFWAHY) form a helical membrane-spanning segment. The Extracellular segment spans residues 90–102 (AAAQWDFGNTMCQ). A helical membrane pass occupies residues 103–124 (LLTGLYFIGFFSGIFFIILLTI). Topologically, residues 125-141 (DRYLAIVHAVFALKART) are cytoplasmic. The chain crosses the membrane as a helical span at residues 142-166 (VTFGVVTSVITWVVAVFASLPGIIF). The Extracellular portion of the chain corresponds to 167 to 198 (TRSQKEGLHYTCSSHFPYSQYQFWKNFQTLKI). A helical transmembrane segment spans residues 199–218 (VILGLVLPLLVMVICYSGIL). Residues 219–235 (KTLLRCRNEKKRHRAVR) are Cytoplasmic-facing. The chain crosses the membrane as a helical span at residues 236 to 260 (LIFTIMIVYFLFWAPYNIVLLLNTF). Residues 261-277 (QEFFGLNNCSSSNRLDQ) lie on the Extracellular side of the membrane. The chain crosses the membrane as a helical span at residues 278–301 (AMQVTETLGMTHCCINPIIYAFVG). Residues 302–352 (EKFRNYLLVFFQKHIAKRFCKCCSIFQQEAPERASSVYTRSTGEQEISVGL) are Cytoplasmic-facing. S-palmitoyl cysteine attachment occurs at residues Cys-321, Cys-323, and Cys-324. Phosphoserine; by BARK1 is present on residues Ser-336, Ser-337, Ser-342, and Ser-349.

This sequence belongs to the G-protein coupled receptor 1 family. As to quaternary structure, interacts with PRAF2. Efficient ligand binding to CCL3/MIP-1alpha and CCL4/MIP-1beta requires sulfation, O-glycosylation and sialic acid modifications. Glycosylation on Ser-6 is required for efficient binding of CCL4. Interacts with GRK2. Interacts with ARRB1 and ARRB2. Interacts with CNIH4. Interacts with S100A4; this interaction stimulates T-lymphocyte chemotaxis. Post-translationally, sulfated on at least 2 of the N-terminal tyrosines. Sulfation is required for efficient binding of the chemokines, CCL3 and CCL4. In terms of processing, palmitoylation in the C-terminal is important for cell surface expression. Phosphorylation on serine residues in the C-terminal is stimulated by binding CC chemokines especially by APO-RANTES. Post-translationally, O-glycosylated, but not N-glycosylated. Ser-6 appears to be the major site even if Ser-7 may be also O-glycosylated. Also sialylated glycans present which contribute to chemokine binding. Thr-16 and Ser-17 may also be glycosylated and, if so, with small moieties such as a T-antigen.

Its subcellular location is the cell membrane. Its function is as follows. Receptor for a number of inflammatory CC-chemokines including CCL3/MIP-1-alpha, CCL4/MIP-1-beta and RANTES and subsequently transduces a signal by increasing the intracellular calcium ion level. May play a role in the control of granulocytic lineage proliferation or differentiation. Participates in T-lymphocyte migration to the infection site by acting as a chemotactic receptor. This is C-C chemokine receptor type 5 (CCR5) from Pan paniscus (Pygmy chimpanzee).